Here is a 78-residue protein sequence, read N- to C-terminus: RNA-binding protein Hfq (78 aa).

The Sm domain maps to Asp-10–Val-69.

Belongs to the Hfq family. In terms of assembly, homohexamer.

Functionally, RNA chaperone that binds small regulatory RNA (sRNAs) and mRNAs to facilitate mRNA translational regulation in response to envelope stress, environmental stress and changes in metabolite concentrations. Also binds with high specificity to tRNAs. The polypeptide is RNA-binding protein Hfq (Paraburkholderia phymatum (strain DSM 17167 / CIP 108236 / LMG 21445 / STM815) (Burkholderia phymatum)).